The following is a 174-amino-acid chain: Gamma-crystallin D (174 aa).

2 Beta/gamma crystallin 'Greek key' domains span residues Gly-2–Ser-40 and Gly-41–Pro-83. Positions His-84–Ser-87 are connecting peptide. Beta/gamma crystallin 'Greek key' domains follow at residues His-88 to Glu-128 and Gly-129 to Met-171.

It belongs to the beta/gamma-crystallin family. Detected in the superior olivary complex and fibers of the ventral aoustic stria of the auditory hindbrain.

Crystallins are the dominant structural components of the vertebrate eye lens. The sequence is that of Gamma-crystallin D (Crygd) from Rattus norvegicus (Rat).